The following is a 215-amino-acid chain: Dual specificity phosphatase 29 (215 aa).

Positions 53 to 201 (HVNEVWPRLH…LRELDKQLVK (149 aa)) constitute a Tyrosine-protein phosphatase domain. A substrate-binding site is contributed by 145–152 (HCAMGRSR). The active-site Phosphocysteine intermediate is cysteine 146.

This sequence belongs to the protein-tyrosine phosphatase family. Non-receptor class dual specificity subfamily. Homodimer. Interacts with PRKAA2. In terms of tissue distribution, skeletal muscle, liver and adipose tissue.

It is found in the cytoplasm. The protein localises to the nucleus. It catalyses the reaction O-phospho-L-tyrosyl-[protein] + H2O = L-tyrosyl-[protein] + phosphate. The catalysed reaction is O-phospho-L-seryl-[protein] + H2O = L-seryl-[protein] + phosphate. The enzyme catalyses O-phospho-L-threonyl-[protein] + H2O = L-threonyl-[protein] + phosphate. Its function is as follows. Dual specificity phosphatase able to dephosphorylate phosphotyrosine, phosphoserine and phosphothreonine residues within the same substrate, with a preference for phosphotyrosine as a substrate. Involved in the modulation of intracellular signaling cascades. In skeletal muscle regulates systemic glucose homeostasis by activating, AMPK, an energy sensor protein kinase. Affects MAP kinase signaling though modulation of the MAPK1/2 cascade in skeletal muscle promoting muscle cell differentiation, development and atrophy. This Mus musculus (Mouse) protein is Dual specificity phosphatase 29.